The primary structure comprises 415 residues: Nuclear hormone receptor family member nhr-153 (415 aa).

A DNA-binding region (nuclear receptor) is located at residues 26-105; sequence PSVCQICRNP…AGMNPMAIQA (80 aa). 2 consecutive NR C4-type zinc fingers follow at residues 29-49 and 65-88; these read CQICRNPAIGYHYEVPSCNGC and CFKVSNCLDGNDVIDTSKRVCRAC. The region spanning 170–406 is the NR LBD domain; the sequence is DQRDLSTALS…DPEVLKKKCI (237 aa).

It belongs to the nuclear hormone receptor family.

It localises to the nucleus. In terms of biological role, orphan nuclear receptor. This chain is Nuclear hormone receptor family member nhr-153 (nhr-153), found in Caenorhabditis elegans.